The sequence spans 172 residues: Nicotinamide-nucleotide adenylyltransferase (172 aa).

The protein belongs to the archaeal NMN adenylyltransferase family.

The protein localises to the cytoplasm. It carries out the reaction beta-nicotinamide D-ribonucleotide + ATP + H(+) = diphosphate + NAD(+). It functions in the pathway cofactor biosynthesis; NAD(+) biosynthesis; NAD(+) from nicotinamide D-ribonucleotide: step 1/1. The chain is Nicotinamide-nucleotide adenylyltransferase from Methanococcus vannielii (strain ATCC 35089 / DSM 1224 / JCM 13029 / OCM 148 / SB).